Reading from the N-terminus, the 195-residue chain is PBAN-type neuropeptides (195 aa).

The first 33 residues, 1 to 33 (MIGFAVFSSFNRFTTIFVCVLLCVVYLLSYASG), serve as a signal peptide directing secretion. A propeptide spanning residues 34–63 (EYDGRDSSSGSNNDRAPSNEFGSCTDGKCI) is cleaved from the precursor. At Leu80 the chain carries Leucine amide. Positions 86–117 (ADRKPEINSDIEAFANAFEEPHWAIVTIPETE) are excised as a propeptide. At Gln120 the chain carries Pyrrolidone carboxylic acid. Leucine amide is present on Leu128. Positions 131 to 153 (ESGEDYFSYGFPKDQEELYTEEQ) are excised as a propeptide. 2 positions are modified to leucine amide: Leu163 and Leu175. Residues 178–195 (QLHNIVDKPRQNFNDPRF) constitute a propeptide that is removed on maturation.

Belongs to the pyrokinin family.

The protein resides in the secreted. A hormone that controls sex pheromone production in females and pheromone responsiveness in male. Also mediates visceral muscle contractile activity (myotropic activity). The polypeptide is PBAN-type neuropeptides (Apis mellifera (Honeybee)).